The chain runs to 510 residues: Glycogen synthase (510 aa).

An ADP-alpha-D-glucose-binding site is contributed by lysine 18.

The protein belongs to the glycosyltransferase 1 family. Bacterial/plant glycogen synthase subfamily.

It carries out the reaction [(1-&gt;4)-alpha-D-glucosyl](n) + ADP-alpha-D-glucose = [(1-&gt;4)-alpha-D-glucosyl](n+1) + ADP + H(+). It functions in the pathway glycan biosynthesis; glycogen biosynthesis. Functionally, synthesizes alpha-1,4-glucan chains using ADP-glucose. The sequence is that of Glycogen synthase from Bordetella bronchiseptica (strain ATCC BAA-588 / NCTC 13252 / RB50) (Alcaligenes bronchisepticus).